Here is a 556-residue protein sequence, read N- to C-terminus: Guard cell S-type anion channel SLAC1 (556 aa).

Residues 1–103 (MERKQSNAHS…GIINGGDGRK (103 aa)) form a disordered region. Topologically, residues 1–189 (MERKQSNAHS…EQWPFLLRFP (189 aa)) are cytoplasmic. Positions 10 to 36 (STFADINEVEDEAEQELQQQENNNNKR) form a coiled coil. The span at 25–34 (ELQQQENNNN) shows a compositional bias: low complexity. Ser59 carries the phosphoserine; by SRK2E modification. Residues 69–79 (RESRERDDKKS) show a composition bias toward basic and acidic residues. A phosphoserine; by SRK2E mark is found at Ser86, Ser113, and Ser120. Residues 86–99 (SFGGFESGGIINGG) are compositionally biased toward gly residues. Phosphoserine is present on Ser146. The chain crosses the membrane as a helical span at residues 190–210 (IGCFGICLGLSSQAVLWLALA). Over 211–216 (KSPATN) the chain is Extracellular. Residues 217–237 (FLHITPLINLVVWLFSLVVLV) traverse the membrane as a helical segment. Topologically, residues 238–265 (SVSFTYILKCIFYFEAVKREYFHPVRVN) are cytoplasmic. A helical membrane pass occupies residues 266-286 (FFFAPWVVCMFLAISVPPMFS). Residues 287-295 (PNRKYLHPA) lie on the Extracellular side of the membrane. Residues 296–316 (IWCVFMGPYFFLELKIYGQWL) form a helical membrane-spanning segment. The Cytoplasmic portion of the chain corresponds to 317–325 (SGGKRRLCK). A helical membrane pass occupies residues 326–346 (VANPSSHLSVVGNFVGAILAS). Residues 347-352 (KVGWDE) are Extracellular-facing. Residues 353–373 (VAKFLWAVGFAHYLVVFVTLY) form a helical membrane-spanning segment. Topologically, residues 374 to 388 (QRLPTSEALPKELHP) are cytoplasmic. Residues 389–409 (VYSMFIAAPSAASIAWNTIYG) form a helical membrane-spanning segment. The Extracellular segment spans residues 410–418 (QFDGCSRTC). Residues 419–439 (FFIALFLYISLVARINFFTGF) form a helical membrane-spanning segment. Lys440 is a topological domain (cytoplasmic). The helical transmembrane segment at 441-463 (FSVAWWSYTFPMTTASVATIKYA) threads the bilayer. Topologically, residues 464-479 (EAVPGYPSRALALTLS) are extracellular. The chain crosses the membrane as a helical span at residues 480–500 (FISTAMVCVLFVSTLLHAFVW). The Cytoplasmic portion of the chain corresponds to 501 to 556 (QTLFPNDLAIAITKRKLTREKKPFKRAYDLKRWTKQALAKKISAEKDFEAEEESHH).

Belongs to the SLAC1 S-type anion channel family. Homotrimer. Interacts with SRK2E, CPK6, CPK21, CPK23 and PP2CA. The channel is inactivated upon PP2CA and ABI1 binding. Interacts with KAT1, KAT2, KAT3/KC1 and AKT2. Interacts with GHR1. In terms of processing, phosphorylation by SRK2E, especially on Ser-120, activates the channel. Also phosphorylated and activated by CPK21 and CPK23. Abscisic acid (ABA) promotes phosphorylation. This phosphorylation is inhibited by ABI1. Phosphorylated and activated by GHR1; this phosphorylation is repressed by ABI2 but not ABI1. Phosphorylated by HT1 on N-terminus but not C-terminus. As to expression, preferentially expressed in guard cells. Also detected in the vascular strands close to the leaf margins.

The protein localises to the cell membrane. Its activity is regulated as follows. Activated by GHR1-mediated phosphorylation which is negatively regulated by ABI2 but not ABI1. Activation by SRK2E/OST1 and GHR1 is repressed by HT1. In terms of biological role, slow, weak voltage-dependent S-type anion efflux channel involved in maintenance of anion homeostasis. Cl(-) efflux through SLAC1 causes membrane depolarization, which activates outward-rectifying K1 channels, leading to KCl and water efflux to reduce turgor further and cause stomatal closure, that reduces water loss and promotes leaf turgor. Essential for stomatal closure in response to CO(2), abscisic acid (ABA), ozone O(3), light/dark transitions, humidity change, calcium ions, hydrogen peroxide H(2)O(2), reactive oxygen species (ROS), and nitric oxide. Binds to the highly selective inward-rectifying potassium channels KAT1 and AKT2, and inhibits their activities. Functions as an essential negative regulator of inward potassium channels in guard cells. Essential for the efficient stomatal closure and opening in guard cells. Involved in the local and/or systemic stomatal responses (e.g. stomatal closure) to light stress. In Arabidopsis thaliana (Mouse-ear cress), this protein is Guard cell S-type anion channel SLAC1.